A 332-amino-acid chain; its full sequence is 1-acyl-sn-glycerol-3-phosphate acyltransferase CHLREDRAFT_174358 (332 aa).

Residues 96 to 116 (FLLSLPLFVTMMVMAPLVLAF) traverse the membrane as a helical segment. The short motif at 163 to 168 (HQSFLD) is the HXXXXD motif element. Residues 185 to 205 (TSNFLIPIIGWSMFLTGHVMI) form a helical membrane-spanning segment. An EGTR motif motif is present at residues 235–238 (EGTR).

The protein belongs to the 1-acyl-sn-glycerol-3-phosphate acyltransferase family.

The protein resides in the membrane. The enzyme catalyses a 1-acyl-sn-glycero-3-phosphate + an acyl-CoA = a 1,2-diacyl-sn-glycero-3-phosphate + CoA. Its pathway is phospholipid metabolism; CDP-diacylglycerol biosynthesis; CDP-diacylglycerol from sn-glycerol 3-phosphate: step 2/3. Functionally, converts lysophosphatidic acid (LPA) into phosphatidic acid by incorporating an acyl moiety at the sn-2 position of the glycerol backbone. In Chlamydomonas reinhardtii (Chlamydomonas smithii), this protein is 1-acyl-sn-glycerol-3-phosphate acyltransferase CHLREDRAFT_174358.